The sequence spans 503 residues: Probable cytosol aminopeptidase (503 aa).

Mn(2+)-binding residues include Lys-270 and Asp-275. The active site involves Lys-282. 3 residues coordinate Mn(2+): Asp-293, Asp-352, and Glu-354. Arg-356 is an active-site residue.

This sequence belongs to the peptidase M17 family. It depends on Mn(2+) as a cofactor.

It is found in the cytoplasm. It carries out the reaction Release of an N-terminal amino acid, Xaa-|-Yaa-, in which Xaa is preferably Leu, but may be other amino acids including Pro although not Arg or Lys, and Yaa may be Pro. Amino acid amides and methyl esters are also readily hydrolyzed, but rates on arylamides are exceedingly low.. The enzyme catalyses Release of an N-terminal amino acid, preferentially leucine, but not glutamic or aspartic acids.. In terms of biological role, presumably involved in the processing and regular turnover of intracellular proteins. Catalyzes the removal of unsubstituted N-terminal amino acids from various peptides. The polypeptide is Probable cytosol aminopeptidase (Serratia proteamaculans (strain 568)).